Here is a 315-residue protein sequence, read N- to C-terminus: Ribose-phosphate pyrophosphokinase (315 aa).

Residues Asp-37–Glu-39 and Arg-96–Gln-97 contribute to the ATP site. His-131 and Asp-170 together coordinate Mg(2+). The active site involves Lys-194. Residues Arg-196, Asp-220, and Asp-224–Thr-228 each bind D-ribose 5-phosphate.

It belongs to the ribose-phosphate pyrophosphokinase family. Class I subfamily. In terms of assembly, homohexamer. Requires Mg(2+) as cofactor.

Its subcellular location is the cytoplasm. The catalysed reaction is D-ribose 5-phosphate + ATP = 5-phospho-alpha-D-ribose 1-diphosphate + AMP + H(+). Its pathway is metabolic intermediate biosynthesis; 5-phospho-alpha-D-ribose 1-diphosphate biosynthesis; 5-phospho-alpha-D-ribose 1-diphosphate from D-ribose 5-phosphate (route I): step 1/1. Its function is as follows. Involved in the biosynthesis of the central metabolite phospho-alpha-D-ribosyl-1-pyrophosphate (PRPP) via the transfer of pyrophosphoryl group from ATP to 1-hydroxyl of ribose-5-phosphate (Rib-5-P). The chain is Ribose-phosphate pyrophosphokinase from Escherichia coli O6:H1 (strain CFT073 / ATCC 700928 / UPEC).